We begin with the raw amino-acid sequence, 1084 residues long: Putative tRNA-specific 2-thiouridylase (1084 aa).

The next 3 membrane-spanning stretches (helical) occupy residues 1 to 21 (MLIF…FILT), 32 to 52 (FIIS…FYVI), and 309 to 329 (IITI…YLIL). Cysteine 538 acts as the Nucleophile in catalysis. Cysteine 538 and cysteine 715 are oxidised to a cystine. Residue cysteine 715 is the Cysteine persulfide intermediate of the active site.

Belongs to the MnmA/TRMU family.

The protein localises to the plastid. It is found in the apicoplast. The protein resides in the membrane. The catalysed reaction is S-sulfanyl-L-cysteinyl-[protein] + uridine(34) in tRNA + AH2 + ATP = 2-thiouridine(34) in tRNA + L-cysteinyl-[protein] + A + AMP + diphosphate + H(+). Functionally, catalyzes the 2-thiolation of uridine at the wobble position (U34) of tRNA, leading to the formation of s(2)U34. Required for apicoplast maintenance. This Plasmodium falciparum (isolate 3D7) protein is Putative tRNA-specific 2-thiouridylase.